The chain runs to 313 residues: Lactamase-like protein ptaB (313 aa).

Zn(2+) is bound by residues H104, H106, D108, and H109. D108 functions as the Proton donor/acceptor in the catalytic mechanism.

It belongs to the metallo-beta-lactamase superfamily. Requires Zn(2+) as cofactor.

The enzyme catalyses atrochrysone carboxyl-[ACP] + H2O = atrochrysone carboxylate + holo-[ACP] + H(+). It functions in the pathway secondary metabolite biosynthesis. Its function is as follows. Lactamase-like protein; part of the gene cluster that mediates the biosynthesis of pestheic acid, a diphenyl ether which is a biosynthetic precursor of the unique chloropupukeananes. The biosynthesis initiates from condensation of acetate and malonate units catalyzed by the non-reducing PKS ptaA. As the ptaA protein is TE/CLC domain-deficient, hydrolysis and Claisen cyclization of the polyketide could be catalyzed by ptaB containing a beta-lactamase domain. The ptaB protein might hydrolyze the thioester bond between the ACP of ptaA and the intermediate to release atrochrysone carboxylic acid, which is spontaneously dehydrated to form endocrocin anthrone. Endocrocin anthrone is then converted to endocrocin, catalyzed by the anthrone oxygenase ptaC. Spontaneous decarboxylation of endocrocin occurs to generate emodin. An O-methyltransferase (ptaH or ptaI) could methylate emodin to form physcion. PtaJ could then catalyze the oxidative cleavage of physcion, and rotation of the intermediate could then afford desmethylisosulochrin. PtaF, a putative NADH-dependent oxidoreductase, might also participate in the oxidative cleavage step. Desmethylisosulochrin is then transformed by another O-methyltransferase (ptaH or ptaI) to form isosulochrin. Chlorination of isosulochrin by ptaM in the cyclohexadienone B ring then produces chloroisosulochrin. PtaE is responsible for the oxidative coupling reactions of both benzophenones isosulochrin and chloroisosulochrin to RES-1214-1 and pestheic acid respectively, regardless of chlorination. This is Lactamase-like protein ptaB from Pestalotiopsis fici (strain W106-1 / CGMCC3.15140).